A 353-amino-acid polypeptide reads, in one-letter code: C-X-C chemokine receptor type 4 (353 aa).

The interval methionine 1–tyrosine 22 is important for chemokine binding and signaling. Over methionine 1–arginine 39 the chain is Extracellular. Residue tyrosine 7 is modified to Sulfotyrosine. Residue asparagine 11 is glycosylated (N-linked (GlcNAc...) asparagine). At tyrosine 12 the chain carries Sulfotyrosine. O-linked (Xyl...) (chondroitin sulfate) serine glycosylation is present at serine 19. A Sulfotyrosine modification is found at tyrosine 22. Intrachain disulfides connect cysteine 29-cysteine 275 and cysteine 110-cysteine 187. A helical transmembrane segment spans residues isoleucine 40–methionine 64. Over glycine 65–arginine 78 the chain is Cytoplasmic. A helical transmembrane segment spans residues leucine 79–valine 100. Residues tryptophan 95–aspartate 98 form a chemokine binding region. At alanine 101–lysine 111 the chain is on the extracellular side. A helical transmembrane segment spans residues alanine 112–isoleucine 131. The chemokine binding stretch occupies residues histidine 114–threonine 118. Residues serine 132–lysine 155 lie on the Cytoplasmic side of the membrane. The Important for signaling motif lies at aspartate 134–tyrosine 136. Residues tyrosine 136–proline 148 are involved in dimerization; when bound to chemokine. The helical transmembrane segment at valine 156–phenylalanine 175 threads the bilayer. Residues alanine 176–tryptophan 196 lie on the Extracellular side of the membrane. The interval cysteine 187–tyrosine 191 is chemokine binding, important for signaling. The tract at residues proline 192 to leucine 211 is involved in dimerization. The chain crosses the membrane as a helical span at residues leucine 197 to leucine 217. At serine 218–threonine 242 the chain is on the cytoplasmic side. Residues valine 243–isoleucine 262 traverse the membrane as a helical segment. Topologically, residues aspartate 263–lysine 283 are extracellular. An involved in dimerization region spans residues leucine 267–glutamate 269. Residues tryptophan 284–tyrosine 303 traverse the membrane as a helical segment. Over alanine 304–serine 353 the chain is Cytoplasmic. Phosphoserine occurs at positions 320 and 322. Residues serine 325 and serine 326 each carry the phosphoserine; by PKC and GRK6 modification. The interval leucine 330–serine 353 is disordered. Serine 331 is subject to Phosphoserine; by GRK6. Residue lysine 332 forms a Glycyl lysine isopeptide (Lys-Gly) (interchain with G-Cter in ubiquitin) linkage. Residues histidine 338–serine 353 are compositionally biased toward low complexity. Position 340 is a phosphoserine; by GRK6 (serine 340). Serine 349 and serine 352 each carry phosphoserine.

The protein belongs to the G-protein coupled receptor 1 family. As to quaternary structure, monomer. Can form homodimers. Interacts with CD164. Interacts with ARRB2; the interaction is dependent on the C-terminal phosphorylation of CXCR4 and allows activation of MAPK1 and MAPK3. Interacts with ARR3; the interaction is dependent on the C-terminal phosphorylation of CXCR4 and modulates calcium mobilization. Interacts with RNF113A; the interaction, enhanced by CXCL12, promotes CXCR4 ubiquitination and subsequent degradation. Interacts (via the cytoplasmic C-terminal) with ITCH (via the WW domains I and II); the interaction, enhanced by CXCL12, promotes CXCR4 ubiquitination and leads to its degradation. Interacts with extracellular ubiquitin. Interacts with DBN1; this interaction is enhanced by antigenic stimulation. Following LPS binding, may form a complex with GDF5, HSP90AA1 and HSPA8. In terms of processing, phosphorylated on agonist stimulation. Rapidly phosphorylated on serine and threonine residues in the C-terminal. Phosphorylation at Ser-325 and Ser-326 leads to recruitment of ITCH, ubiquitination and protein degradation. Ubiquitinated after ligand binding, leading to its degradation. Ubiquitinated by ITCH at the cell membrane on agonist stimulation. The ubiquitin-dependent mechanism, endosomal sorting complex required for transport (ESCRT), then targets CXCR4 for lysosomal degradation. This process is dependent also on prior Ser-/Thr-phosphorylation in the C-terminal of CXCR4. Also binding of ARRB1 to STAM negatively regulates CXCR4 sorting to lysosomes though modulating ubiquitination of SFR5S. Post-translationally, sulfation is required for efficient binding of CXCL12/SDF-1alpha and promotes its dimerization. In terms of processing, O- and N-glycosylated. N-glycosylation can mask coreceptor function. The O-glycosylation chondroitin sulfate attachment does not affect interaction with CXCL12/SDF-1alpha nor its coreceptor activity.

It localises to the cell membrane. Its subcellular location is the cell junction. The protein localises to the early endosome. The protein resides in the late endosome. It is found in the lysosome. Functionally, receptor for the C-X-C chemokine CXCL12/SDF-1 that transduces a signal by increasing intracellular calcium ion levels and enhancing MAPK1/MAPK3 activation. Involved in the AKT signaling cascade. Plays a role in regulation of cell migration, e.g. during wound healing. Acts as a receptor for extracellular ubiquitin; leading to enhanced intracellular calcium ions and reduced cellular cAMP levels. Binds bacterial lipopolysaccharide (LPS) et mediates LPS-induced inflammatory response, including TNF secretion by monocytes. Involved in hematopoiesis and in cardiac ventricular septum formation. Also plays an essential role in vascularization of the gastrointestinal tract, probably by regulating vascular branching and/or remodeling processes in endothelial cells. Involved in cerebellar development. In the CNS, could mediate hippocampal-neuron survival. The protein is C-X-C chemokine receptor type 4 (CXCR4) of Felis catus (Cat).